Reading from the N-terminus, the 196-residue chain is Probable DNA-directed RNA polymerase subunit delta (196 aa).

An HTH HARE-type domain is found at 14–81 (LSMIEVAHEI…GDNVWGLRSW (68 aa)). Acidic residues predominate over residues 119–150 (DDDDVIDYDDDDPEDEDLDNDYDDEDDDDDEG). Positions 119–196 (DDDDVIDYDD…DADLDEENQD (78 aa)) are disordered. Basic and acidic residues predominate over residues 151–161 (SHELKQYTKDL). Acidic residues-rich tracts occupy residues 162 to 176 (DDID…ELAD) and 186 to 196 (SDADLDEENQD).

The protein belongs to the RpoE family. As to quaternary structure, RNAP is composed of a core of 2 alpha, a beta and a beta' subunits. The core is associated with a delta subunit and one of several sigma factors.

Its function is as follows. Participates in both the initiation and recycling phases of transcription. In the presence of the delta subunit, RNAP displays an increased specificity of transcription, a decreased affinity for nucleic acids, and an increased efficiency of RNA synthesis because of enhanced recycling. This chain is Probable DNA-directed RNA polymerase subunit delta, found in Ligilactobacillus salivarius (strain UCC118) (Lactobacillus salivarius).